A 260-amino-acid polypeptide reads, in one-letter code: Zinc finger protein 575 (260 aa).

Residues 22–81 (PGLGPGRWLLPGAHQPSCPPAPHQGPLQKPSQSAPGPTASASAPPRPRRRPPPQRPHRCP) form a disordered region. The span at 51-64 (PSQSAPGPTASASA) shows a compositional bias: low complexity. Residues 67-78 (RPRRRPPPQRPH) are compositionally biased toward basic residues. 6 consecutive C2H2-type zinc fingers follow at residues 78-100 (HRCP…RLAH), 106-128 (HPCP…RLTH), 134-156 (HPCP…LWTH), 162-184 (YPCP…RHTH), 192-214 (YPCP…RLCH), and 228-255 (HRCS…QVEH).

This sequence belongs to the krueppel C2H2-type zinc-finger protein family.

The protein localises to the nucleus. In terms of biological role, may be involved in transcriptional regulation. In Macaca fascicularis (Crab-eating macaque), this protein is Zinc finger protein 575 (ZNF575).